Consider the following 72-residue polypeptide: SRY-related protein MG43 (72 aa).

Residues 1–69 constitute a DNA-binding region (HMG box); sequence VKRPMNAFMV…KHMADYPDYK (69 aa).

The protein resides in the nucleus. The polypeptide is SRY-related protein MG43 (Tarentola mauritanica (Common wall gecko)).